The chain runs to 863 residues: Glycogen phosphorylase (863 aa).

N6-(pyridoxal phosphate)lysine is present on Lys-618.

The protein belongs to the glycogen phosphorylase family. Requires pyridoxal 5'-phosphate as cofactor.

It carries out the reaction [(1-&gt;4)-alpha-D-glucosyl](n) + phosphate = [(1-&gt;4)-alpha-D-glucosyl](n-1) + alpha-D-glucose 1-phosphate. In terms of biological role, phosphorylase is an important allosteric enzyme in carbohydrate metabolism. Enzymes from different sources differ in their regulatory mechanisms and in their natural substrates. However, all known phosphorylases share catalytic and structural properties. The protein is Glycogen phosphorylase (glgP) of Mycobacterium tuberculosis (strain ATCC 25618 / H37Rv).